The following is a 242-amino-acid chain: Small ribosomal subunit protein uS2 (242 aa).

This sequence belongs to the universal ribosomal protein uS2 family.

The polypeptide is Small ribosomal subunit protein uS2 (Mannheimia succiniciproducens (strain KCTC 0769BP / MBEL55E)).